We begin with the raw amino-acid sequence, 531 residues long: UDP-glucuronosyltransferase 1A5 (531 aa).

The N-terminal stretch at 1-25 (MGLHVTLQGLAGLLLLLYALPWAEG) is a signal peptide. 5 N-linked (GlcNAc...) asparagine glycosylation sites follow: asparagine 116, asparagine 131, asparagine 139, asparagine 293, and asparagine 431. Residues 489 to 505 (VIGFLLAIVLTVVFIVY) form a helical membrane-spanning segment.

The protein belongs to the UDP-glycosyltransferase family. Homodimer. Homooligomer. Interacts with UGT1A1, UGT1A3, UGT1A4, UGT1A6, UGT1A7, UGT1A8, UGT1A9 and UGT1A10 to form heterodimers.

The protein localises to the endoplasmic reticulum membrane. It carries out the reaction glucuronate acceptor + UDP-alpha-D-glucuronate = acceptor beta-D-glucuronoside + UDP + H(+). It catalyses the reaction zolasartan + UDP-alpha-D-glucuronate = zolarsartan-1-N-beta-D-glucuronide + UDP. Functionally, UDP-glucuronosyltransferase (UGT) that catalyzes phase II biotransformation reactions in which lipophilic substrates are conjugated with glucuronic acid to increase the metabolite's water solubility, thereby facilitating excretion into either the urine or bile. Essential for the elimination and detoxification of drugs, xenobiotics and endogenous compounds. Involved in the glucuronidation of the AGTR1 angiotensin receptor antagonist zolarsatan, a drug which can inhibit the effect of angiotensin II. This chain is UDP-glucuronosyltransferase 1A5, found in Rattus norvegicus (Rat).